Here is a 280-residue protein sequence, read N- to C-terminus: Small ribosomal subunit protein uS15m (280 aa).

Belongs to the universal ribosomal protein uS15 family. Component of the mitochondrial ribosome small subunit (28S) which comprises a 12S rRNA and about 30 distinct proteins. Expressed in anterior and posterior midgut primordia in stage 11 embryos. In stage 13 embryos, expression is high in the developing midgut and hindgut. In stage 16 embryos, expression is elevated in the midgut, hindgut, and in a small region that will give rise to pharyngeal muscles and to the stomatogastric nervous system. In larvae, expression is predominant in the gut, and head, presumably in pharyngeal muscles.

The protein resides in the mitochondrion. In terms of biological role, essential for gut mitochondrial activity. Might be involved in tissue specific growth factor production. This chain is Small ribosomal subunit protein uS15m (bonsai), found in Drosophila melanogaster (Fruit fly).